Here is a 476-residue protein sequence, read N- to C-terminus: Siroheme synthase 1 (476 aa).

The precorrin-2 dehydrogenase /sirohydrochlorin ferrochelatase stretch occupies residues 1-203 (MDYLPIFADL…GQTAEAQRQL (203 aa)). Residues 22-23 (EV) and 43-44 (QS) contribute to the NAD(+) site. Ser128 is subject to Phosphoserine. The segment at 219–476 (GEIALVGAGP…VSRPAVVNLA (258 aa)) is uroporphyrinogen-III C-methyltransferase. Position 228 (Pro228) interacts with S-adenosyl-L-methionine. Asp251 (proton acceptor) is an active-site residue. Residue Lys273 is the Proton donor of the active site. S-adenosyl-L-methionine-binding positions include 304 to 306 (GGD), Ile309, 334 to 335 (TA), Met386, and Gly415.

This sequence in the N-terminal section; belongs to the precorrin-2 dehydrogenase / sirohydrochlorin ferrochelatase family. It in the C-terminal section; belongs to the precorrin methyltransferase family.

It carries out the reaction uroporphyrinogen III + 2 S-adenosyl-L-methionine = precorrin-2 + 2 S-adenosyl-L-homocysteine + H(+). The enzyme catalyses precorrin-2 + NAD(+) = sirohydrochlorin + NADH + 2 H(+). The catalysed reaction is siroheme + 2 H(+) = sirohydrochlorin + Fe(2+). It functions in the pathway cofactor biosynthesis; adenosylcobalamin biosynthesis; precorrin-2 from uroporphyrinogen III: step 1/1. It participates in cofactor biosynthesis; adenosylcobalamin biosynthesis; sirohydrochlorin from precorrin-2: step 1/1. Its pathway is porphyrin-containing compound metabolism; siroheme biosynthesis; precorrin-2 from uroporphyrinogen III: step 1/1. The protein operates within porphyrin-containing compound metabolism; siroheme biosynthesis; siroheme from sirohydrochlorin: step 1/1. It functions in the pathway porphyrin-containing compound metabolism; siroheme biosynthesis; sirohydrochlorin from precorrin-2: step 1/1. In terms of biological role, multifunctional enzyme that catalyzes the SAM-dependent methylations of uroporphyrinogen III at position C-2 and C-7 to form precorrin-2 via precorrin-1. Then it catalyzes the NAD-dependent ring dehydrogenation of precorrin-2 to yield sirohydrochlorin. Finally, it catalyzes the ferrochelation of sirohydrochlorin to yield siroheme. The polypeptide is Siroheme synthase 1 (Serratia proteamaculans (strain 568)).